Reading from the N-terminus, the 395-residue chain is uncharacterized protein (395 aa).

Disordered stretches follow at residues 17-155 and 276-304; these read EVKK…QVKT and EERE…HEQK. Composition is skewed to polar residues over residues 42–71 and 81–96; these read DGNN…SNVV and GDAS…NVVK. Basic and acidic residues predominate over residues 103 to 133; that stretch reads VAEKPEKEDLAVIESEDKAAKPDGEIKKNVE. The segment covering 134–143 has biased composition (low complexity); that stretch reads TEVTSRSTSS. Composition is skewed to basic and acidic residues over residues 144–155 and 276–290; these read QEKDELEKQVKT and EERE…KEQS. Positions 224 to 351 form a coiled coil; sequence LKMNGKEDDL…QRRLKELEAM (128 aa). Positions 291-300 are enriched in polar residues; that stretch reads SEGSKTANQT.

Its subcellular location is the cytoplasm. This is an uncharacterized protein from Schizosaccharomyces pombe (strain 972 / ATCC 24843) (Fission yeast).